The following is a 357-amino-acid chain: Heat-inducible transcription repressor HrcA (357 aa).

The protein belongs to the HrcA family.

Negative regulator of class I heat shock genes (grpE-dnaK-dnaJ and groELS operons). Prevents heat-shock induction of these operons. The polypeptide is Heat-inducible transcription repressor HrcA (Ureaplasma parvum serovar 3 (strain ATCC 27815 / 27 / NCTC 11736)).